Consider the following 399-residue polypeptide: Tyrosine--tRNA ligase (399 aa).

Residues 44 to 53 carry the 'HIGH' region motif; that stretch reads PTAPDLHLGH. Positions 229 to 233 match the 'KMSKS' region motif; the sequence is KMSKS. ATP is bound at residue lysine 232. In terms of domain architecture, S4 RNA-binding spans 338-398; it reads ISITKALVDC…GKRKFAKLKV (61 aa).

It belongs to the class-I aminoacyl-tRNA synthetase family. TyrS type 2 subfamily. As to quaternary structure, homodimer.

Its subcellular location is the cytoplasm. The enzyme catalyses tRNA(Tyr) + L-tyrosine + ATP = L-tyrosyl-tRNA(Tyr) + AMP + diphosphate + H(+). Its function is as follows. Catalyzes the attachment of tyrosine to tRNA(Tyr) in a two-step reaction: tyrosine is first activated by ATP to form Tyr-AMP and then transferred to the acceptor end of tRNA(Tyr). This is Tyrosine--tRNA ligase from Sulfurimonas denitrificans (strain ATCC 33889 / DSM 1251) (Thiomicrospira denitrificans (strain ATCC 33889 / DSM 1251)).